We begin with the raw amino-acid sequence, 302 residues long: Porphobilinogen deaminase (302 aa).

An S-(dipyrrolylmethanemethyl)cysteine modification is found at cysteine 234.

The protein belongs to the HMBS family. In terms of assembly, monomer. Requires dipyrromethane as cofactor.

The enzyme catalyses 4 porphobilinogen + H2O = hydroxymethylbilane + 4 NH4(+). It participates in porphyrin-containing compound metabolism; protoporphyrin-IX biosynthesis; coproporphyrinogen-III from 5-aminolevulinate: step 2/4. Functionally, tetrapolymerization of the monopyrrole PBG into the hydroxymethylbilane pre-uroporphyrinogen in several discrete steps. This is Porphobilinogen deaminase from Corynebacterium glutamicum (strain R).